The following is a 425-amino-acid chain: C2H2 type master regulator of conidiophore development brlA (425 aa).

Disordered stretches follow at residues 28 to 72 (MASS…RHTG), 232 to 257 (KTHS…PMSR), and 281 to 301 (VQRQ…SLSL). Positions 30–44 (SSFSPMESPTPTPTS) are enriched in low complexity. The span at 232 to 256 (KTHSPTTPVRSCSLGTTSGTDTPMS) shows a compositional bias: polar residues. Residues 285-294 (PSRKVARKQS) are compositionally biased toward basic residues. 2 consecutive C2H2-type zinc fingers follow at residues 321-345 (KGRF…PHVC) and 351-376 (ERAF…GRNR). Positions 365 to 374 (TKTHSKRGGR) are enriched in basic residues. Residues 365-425 (TKTHSKRGGR…RETSEEAWLE (61 aa)) form a disordered region.

The protein resides in the nucleus. Its function is as follows. BrlA, abaA and wetA are pivotal regulators of conidiophore development and conidium maturation. They act individually and together to regulate their own expression and that of numerous other sporulation-specific genes. Binds promoters of target genes at brlA response elements (BREs) containing the conserved sequence 5'-(C/A)(A/G)AGGG(G/A)-3'. Also coordinates the expression of carbohydrate-active enzymes and of the key effectors of cell wall remodeling during autolysis. The polypeptide is C2H2 type master regulator of conidiophore development brlA (Aspergillus niger (strain ATCC MYA-4892 / CBS 513.88 / FGSC A1513)).